The primary structure comprises 201 residues: Small ribosomal subunit protein uS5 (201 aa).

The interval 1-28 (MAHQNEQRGGGDRGRGRGRGRDRDQERD) is disordered. The region spanning 31 to 94 (LVDKLVHINR…DEAKKNMIRV (64 aa)) is the S5 DRBM domain. The tract at residues 173–201 (SVAAKRGLKVGDLVNRRDDGASSPEAIEA) is disordered.

Belongs to the universal ribosomal protein uS5 family. In terms of assembly, part of the 30S ribosomal subunit. Contacts proteins S4 and S8.

Functionally, with S4 and S12 plays an important role in translational accuracy. Its function is as follows. Located at the back of the 30S subunit body where it stabilizes the conformation of the head with respect to the body. This chain is Small ribosomal subunit protein uS5, found in Maricaulis maris (strain MCS10) (Caulobacter maris).